We begin with the raw amino-acid sequence, 354 residues long: Methylthioribose-1-phosphate isomerase (354 aa).

Residues arginine 58–alanine 60, arginine 101, and glutamine 204 each bind substrate. The active-site Proton donor is the aspartate 245. Substrate is bound at residue asparagine 255–lysine 256.

This sequence belongs to the eIF-2B alpha/beta/delta subunits family. MtnA subfamily.

It carries out the reaction 5-(methylsulfanyl)-alpha-D-ribose 1-phosphate = 5-(methylsulfanyl)-D-ribulose 1-phosphate. It participates in amino-acid biosynthesis; L-methionine biosynthesis via salvage pathway; L-methionine from S-methyl-5-thio-alpha-D-ribose 1-phosphate: step 1/6. Its function is as follows. Catalyzes the interconversion of methylthioribose-1-phosphate (MTR-1-P) into methylthioribulose-1-phosphate (MTRu-1-P). The chain is Methylthioribose-1-phosphate isomerase from Xanthomonas axonopodis pv. citri (strain 306).